A 682-amino-acid chain; its full sequence is DNA ligase (682 aa).

Residues 42–46, 91–92, and glutamate 124 contribute to the NAD(+) site; these read DAEYD and SL. Residue lysine 126 is the N6-AMP-lysine intermediate of the active site. Arginine 147, glutamate 184, lysine 302, and lysine 326 together coordinate NAD(+). Residues cysteine 420, cysteine 423, cysteine 438, and cysteine 444 each coordinate Zn(2+). A BRCT domain is found at 603 to 682; the sequence is IADNPLKGKS…QEFIALTGEN (80 aa).

This sequence belongs to the NAD-dependent DNA ligase family. LigA subfamily. It depends on Mg(2+) as a cofactor. Mn(2+) is required as a cofactor.

It catalyses the reaction NAD(+) + (deoxyribonucleotide)n-3'-hydroxyl + 5'-phospho-(deoxyribonucleotide)m = (deoxyribonucleotide)n+m + AMP + beta-nicotinamide D-nucleotide.. Functionally, DNA ligase that catalyzes the formation of phosphodiester linkages between 5'-phosphoryl and 3'-hydroxyl groups in double-stranded DNA using NAD as a coenzyme and as the energy source for the reaction. It is essential for DNA replication and repair of damaged DNA. The chain is DNA ligase from Actinobacillus pleuropneumoniae serotype 7 (strain AP76).